Consider the following 568-residue polypeptide: MTHSVEDIKSTSRRLRGSLEQSLADPVTGALREDDQTLIKYHGSYQQDDRDIRDERRRQKLEPAYQFMIRTRTPGGVISPSQWLALDGIATRYANHSLRITTRQAFQFHGVIKRELKATMQAINATLIDTLAACGDVNRNVQVAANPLRSQAHATLYADAARVSEHLLPNTRAYYEIWLDEERVSGSGAEDEPIYGDRYLPRKFKIGFAAPPHNDVDVFANDLGFIAILREGQLLGYNVSIGGGMGASHGDAETWPRVANVIGFVTGDQLLDIATAVVTTQRDLGNRAVRKRARFKYTIDDHGLDTIVAEIERRAGFSLQPAQPFAFAHNGDRYGWVEGEQGDWHLTLSLPAGRIADTDTAAHLSGLRAIAQLQMGEFRMTPNQNLVIAGVPAEQRAQIDQLVAQYGLDAGNLAPTALARGAMACVALPTCGLAMAEAERYLPDFSAALQPLLERHGLAQTPIVLRLSGCPNGCSRPYLAEIALVGKAPGRYNLMLGGDRRGQRLNTLYRENINEADILAALEPLLARYAAERDRHTDEGFGDFLHRSGLIALPPYPTHRHLDLELLA.

Cys-425, Cys-431, Cys-470, and Cys-474 together coordinate [4Fe-4S] cluster. Residue Cys-474 coordinates siroheme.

Belongs to the nitrite and sulfite reductase 4Fe-4S domain family. In terms of assembly, alpha(8)-beta(8). The alpha component is a flavoprotein, the beta component is a hemoprotein. It depends on siroheme as a cofactor. Requires [4Fe-4S] cluster as cofactor.

It carries out the reaction hydrogen sulfide + 3 NADP(+) + 3 H2O = sulfite + 3 NADPH + 4 H(+). It functions in the pathway sulfur metabolism; hydrogen sulfide biosynthesis; hydrogen sulfide from sulfite (NADPH route): step 1/1. Functionally, component of the sulfite reductase complex that catalyzes the 6-electron reduction of sulfite to sulfide. This is one of several activities required for the biosynthesis of L-cysteine from sulfate. The polypeptide is Sulfite reductase [NADPH] hemoprotein beta-component (Xanthomonas campestris pv. campestris (strain ATCC 33913 / DSM 3586 / NCPPB 528 / LMG 568 / P 25)).